We begin with the raw amino-acid sequence, 511 residues long: Intermediate cleaving peptidase 55 (511 aa).

Mn(2+) is bound by residues D327, D338, H417, E444, and E467.

It belongs to the peptidase M24B family. Mn(2+) serves as cofactor.

The protein localises to the nucleus. The protein resides in the mitochondrion inner membrane. The enzyme catalyses The enzyme cleaves the 36-Pro-Pro-37 bond of cysteine desulfurase (EC 2.8.1.7) removing three amino acid residues (Tyr-Ser-Pro) from the N-terminus after cleavage by mitochondrial processing peptidase.. Functionally, aminopeptidase which cleaves preprotein intermediates that carry destabilizing N-ter amino acid residues after the mitochondrial processing peptidase (MPP) cleavage site and is thus critical for stabilization of the mitochondrial proteome. The chain is Intermediate cleaving peptidase 55 (ICP55) from Saccharomyces cerevisiae (strain ATCC 204508 / S288c) (Baker's yeast).